The primary structure comprises 93 residues: Small ribosomal subunit protein uS19 (93 aa).

It belongs to the universal ribosomal protein uS19 family.

Protein S19 forms a complex with S13 that binds strongly to the 16S ribosomal RNA. This chain is Small ribosomal subunit protein uS19, found in Lawsonia intracellularis (strain PHE/MN1-00).